Here is a 618-residue protein sequence, read N- to C-terminus: MSDVIRLLPDSIANQIAAGEVIQRPASVVKELLENALDAGASIIRLDVREAGRELIRVTDNGKGMSQSDARMAFERHATSKIASFQDLFSLRTMGFRGEALASIAAVAQVELLTRRAEDELGTRLTINGSEVGEVATVTSPLGCILCVKNLFYNVPARRKFLKSNETEFRHILTEYERVALVNPQVAFSIYHSGELVQDLPPSPLKKRILDVFGKRMEKDLIPIGMKSPITNISGFVGRPDGARKRGALQYFFVNGRFMRHPYFHKAVMAAYEAIIPQGTMPNYFLYFDLEPSQIDVNIHPTKTEIKFSDEQAIFKLIGVVIREALSSSNAVPAIDFDRKELIDIPAYQGPGKNVVRPPVDLDPSYNPFKETGLTEPIRSSRRQSPDMGWNELFKQFEAKRDAEKMAEPPIRSEELFASTDFTPSAVSATPSTDMLCYVHRGRYLVTTLSRGLALVDFHRAHKRILYDRFMADESRRHIEQQQLLFPELLEFNPSDASAVKAAVDELQSVGFDLSPLGVSSYSLLAAPVQIIDCAADVVRDVIHTTLEDGRSSHEQMLELIATQIAEYQAIPCGKTPTAEEASDLLAELFASNDSTYTPDGKLIVSIIEEADIARRFE.

It belongs to the DNA mismatch repair MutL/HexB family.

This protein is involved in the repair of mismatches in DNA. It is required for dam-dependent methyl-directed DNA mismatch repair. May act as a 'molecular matchmaker', a protein that promotes the formation of a stable complex between two or more DNA-binding proteins in an ATP-dependent manner without itself being part of a final effector complex. The protein is DNA mismatch repair protein MutL of Porphyromonas gingivalis (strain ATCC BAA-308 / W83).